The sequence spans 404 residues: Tyrosine--tRNA ligase (404 aa).

The 'HIGH' region signature appears at 45–54 (PTAPDLHLGH). A 'KMSKS' region motif is present at residues 229–233 (KMSKS). ATP is bound at residue lysine 232. The 61-residue stretch at 342–402 (IFIASIVRLA…GKKAIAQVTF (61 aa)) folds into the S4 RNA-binding domain.

This sequence belongs to the class-I aminoacyl-tRNA synthetase family. TyrS type 2 subfamily. In terms of assembly, homodimer.

It is found in the cytoplasm. The catalysed reaction is tRNA(Tyr) + L-tyrosine + ATP = L-tyrosyl-tRNA(Tyr) + AMP + diphosphate + H(+). In terms of biological role, catalyzes the attachment of tyrosine to tRNA(Tyr) in a two-step reaction: tyrosine is first activated by ATP to form Tyr-AMP and then transferred to the acceptor end of tRNA(Tyr). This Acinetobacter baylyi (strain ATCC 33305 / BD413 / ADP1) protein is Tyrosine--tRNA ligase.